Reading from the N-terminus, the 543-residue chain is CTP synthase (543 aa).

The tract at residues 1–267 is amidoligase domain; that stretch reads MKQTKYIFVT…LNPIAEILDL (267 aa). Residue S15 coordinates CTP. S15 contributes to the UTP binding site. Residues 16–21 and D73 each bind ATP; that span reads SLGKGI. Residues D73 and E141 each coordinate Mg(2+). CTP contacts are provided by residues 148–150, 188–193, and K224; these read DIE and KTKPTQ. UTP-binding positions include 188 to 193 and K224; that span reads KTKPTQ. The region spanning 292–543 is the Glutamine amidotransferase type-1 domain; it reads KIAFVGKYVD…IKAAINYEDN (252 aa). G354 is an L-glutamine binding site. C381 functions as the Nucleophile; for glutamine hydrolysis in the catalytic mechanism. L-glutamine contacts are provided by residues 382-385, E405, and R473; that span reads LGMQ. Active-site residues include H516 and E518.

The protein belongs to the CTP synthase family. Homotetramer.

The enzyme catalyses UTP + L-glutamine + ATP + H2O = CTP + L-glutamate + ADP + phosphate + 2 H(+). It catalyses the reaction L-glutamine + H2O = L-glutamate + NH4(+). The catalysed reaction is UTP + NH4(+) + ATP = CTP + ADP + phosphate + 2 H(+). The protein operates within pyrimidine metabolism; CTP biosynthesis via de novo pathway; CTP from UDP: step 2/2. Allosterically activated by GTP, when glutamine is the substrate; GTP has no effect on the reaction when ammonia is the substrate. The allosteric effector GTP functions by stabilizing the protein conformation that binds the tetrahedral intermediate(s) formed during glutamine hydrolysis. Inhibited by the product CTP, via allosteric rather than competitive inhibition. Functionally, catalyzes the ATP-dependent amination of UTP to CTP with either L-glutamine or ammonia as the source of nitrogen. Regulates intracellular CTP levels through interactions with the four ribonucleotide triphosphates. The chain is CTP synthase from Campylobacter jejuni subsp. doylei (strain ATCC BAA-1458 / RM4099 / 269.97).